The primary structure comprises 376 residues: TraB domain-containing protein (376 aa).

Residue Met1 is modified to N-acetylmethionine. Position 64 is a phosphothreonine (Thr64).

The protein is TraB domain-containing protein (Trabd) of Mus musculus (Mouse).